Here is a 450-residue protein sequence, read N- to C-terminus: Nicotinamide phosphoribosyltransferase (450 aa).

Arg210 provides a ligand contact to diphosphate. Asp233 is a binding site for beta-nicotinamide D-ribonucleotide. Positions 249 and 310 each coordinate diphosphate. Residues 310–312 (RAD), 364–365 (GD), and Arg403 contribute to the beta-nicotinamide D-ribonucleotide site.

This sequence belongs to the NAPRTase family.

It catalyses the reaction beta-nicotinamide D-ribonucleotide + diphosphate = 5-phospho-alpha-D-ribose 1-diphosphate + nicotinamide + H(+). It functions in the pathway cofactor biosynthesis; NAD(+) biosynthesis; nicotinamide D-ribonucleotide from 5-phospho-alpha-D-ribose 1-diphosphate and nicotinamide: step 1/1. Functionally, catalyzes the condensation of nicotinamide with 5-phosphoribosyl-1-pyrophosphate to yield nicotinamide mononucleotide, an intermediate in the biosynthesis of NAD. The protein is Nicotinamide phosphoribosyltransferase of Mycoplasma genitalium (strain ATCC 33530 / DSM 19775 / NCTC 10195 / G37) (Mycoplasmoides genitalium).